We begin with the raw amino-acid sequence, 105 residues long: Small ribosomal subunit protein uS10 (105 aa).

It belongs to the universal ribosomal protein uS10 family. Part of the 30S ribosomal subunit.

In terms of biological role, involved in the binding of tRNA to the ribosomes. This is Small ribosomal subunit protein uS10 from Gloeothece citriformis (strain PCC 7424) (Cyanothece sp. (strain PCC 7424)).